We begin with the raw amino-acid sequence, 119 residues long: Large ribosomal subunit protein bL19 (119 aa).

The protein belongs to the bacterial ribosomal protein bL19 family.

This protein is located at the 30S-50S ribosomal subunit interface and may play a role in the structure and function of the aminoacyl-tRNA binding site. This is Large ribosomal subunit protein bL19 from Leuconostoc mesenteroides subsp. mesenteroides (strain ATCC 8293 / DSM 20343 / BCRC 11652 / CCM 1803 / JCM 6124 / NCDO 523 / NBRC 100496 / NCIMB 8023 / NCTC 12954 / NRRL B-1118 / 37Y).